A 556-amino-acid polypeptide reads, in one-letter code: Solute carrier family 22 member 20 (556 aa).

The Cytoplasmic portion of the chain corresponds to 1-15; it reads MAFTDLLDALGGVGR. Residues 16–36 form a helical membrane-spanning segment; it reads FQLVYTALLLLPCGLLACHTF. The Extracellular segment spans residues 37 to 137; sequence LQNFTAAAPP…LVCEARTLRD (101 aa). N-linked (GlcNAc...) asparagine glycosylation is found at Asn39, Asn54, Asn61, and Asn96. Residues 138–158 traverse the membrane as a helical segment; the sequence is LAQSIYMSGVLVGAALFGGLA. The Cytoplasmic segment spans residues 159–166; it reads DRLGRKAP. Residues 167-187 form a helical membrane-spanning segment; sequence LVWSYLQLAVSGAATAYVGSF. Residues 188–194 are Extracellular-facing; that stretch reads SAYCVFR. Residues 195–215 traverse the membrane as a helical segment; sequence FLMGMTFSGIILNSLSLVVEW. Topologically, residues 216–225 are cytoplasmic; that stretch reads MPTRGRTVAG. A helical transmembrane segment spans residues 226–246; that stretch reads ILLGFSFTLGQLILAGVAYLI. Residues 247–250 are Extracellular-facing; it reads RPWR. Residues 251-271 form a helical membrane-spanning segment; sequence WLQFAVSAPFLVFFLYSWWLP. Over 272 to 339 the chain is Cytoplasmic; the sequence is ESSRWLLLHG…DLFRTPAIRR (68 aa). A helical membrane pass occupies residues 340 to 360; it reads VTCCLMGVWFSNSVAYYGLAM. Residues 361-366 lie on the Extracellular side of the membrane; that stretch reads DLQKFG. Residues 367-387 traverse the membrane as a helical segment; sequence LSIYLVQALFGIIDIPAMLVA. At 388–397 the chain is on the cytoplasmic side; it reads TTTMIYVGRR. A helical transmembrane segment spans residues 398-418; it reads ATVSSFLILAGLMVIANMFMP. Topologically, residues 419–425 are extracellular; that stretch reads EDLQTLR. Residues 426-446 traverse the membrane as a helical segment; the sequence is TVQAALGKGCLASSFICVYLF. Over 447 to 457 the chain is Cytoplasmic; the sequence is TGELYPTEIRQ. A helical transmembrane segment spans residues 458–478; that stretch reads MGMGFASVNARLGGLVAPLIT. At 479–485 the chain is on the extracellular side; it reads TLGEISP. Residues 486–506 traverse the membrane as a helical segment; it reads VLPPVSFGATSVLAGMAVACF. Over 507–556 the chain is Cytoplasmic; sequence LTETRNVPLVETIAAMERRVKQGRSKRDTEQKSEEISLQQLGASPLKETI. Positions 526–541 are enriched in basic and acidic residues; the sequence is VKQGRSKRDTEQKSEE. Residues 526 to 556 form a disordered region; sequence VKQGRSKRDTEQKSEEISLQQLGASPLKETI.

Belongs to the major facilitator (TC 2.A.1) superfamily. Organic cation transporter (TC 2.A.1.19) family. In terms of tissue distribution, highly expressed in olfactory mucosa. Weakly expressed in testis. Not detected in heart, spleen, lung, kidney or brain.

Its subcellular location is the membrane. In terms of biological role, organic anion transporter that mediates the uptake of estrone sulfate. Inhibited by probenecid, propionate, 2-methylbutyrate, 3-methylbutyrate, benzoate, heptanoate and 2-ethylhaxanoate. May act as an odorant transporter. This chain is Solute carrier family 22 member 20 (Slc22a20), found in Mus musculus (Mouse).